Here is a 351-residue protein sequence, read N- to C-terminus: Holliday junction branch migration complex subunit RuvB (351 aa).

The interval methionine 1–threonine 22 is disordered. A large ATPase domain (RuvB-L) region spans residues serine 2 to tyrosine 185. ATP-binding positions include leucine 24, arginine 25, glycine 66, lysine 69, threonine 70, threonine 71, glutamate 132–phenylalanine 134, arginine 175, tyrosine 185, and arginine 222. Residue threonine 70 coordinates Mg(2+). The interval threonine 186 to glutamate 256 is small ATPAse domain (RuvB-S). Positions alanine 259 to aspartate 351 are head domain (RuvB-H). Arginine 295, arginine 314, and arginine 319 together coordinate DNA.

The protein belongs to the RuvB family. As to quaternary structure, homohexamer. Forms an RuvA(8)-RuvB(12)-Holliday junction (HJ) complex. HJ DNA is sandwiched between 2 RuvA tetramers; dsDNA enters through RuvA and exits via RuvB. An RuvB hexamer assembles on each DNA strand where it exits the tetramer. Each RuvB hexamer is contacted by two RuvA subunits (via domain III) on 2 adjacent RuvB subunits; this complex drives branch migration. In the full resolvosome a probable DNA-RuvA(4)-RuvB(12)-RuvC(2) complex forms which resolves the HJ.

It is found in the cytoplasm. It carries out the reaction ATP + H2O = ADP + phosphate + H(+). Functionally, the RuvA-RuvB-RuvC complex processes Holliday junction (HJ) DNA during genetic recombination and DNA repair, while the RuvA-RuvB complex plays an important role in the rescue of blocked DNA replication forks via replication fork reversal (RFR). RuvA specifically binds to HJ cruciform DNA, conferring on it an open structure. The RuvB hexamer acts as an ATP-dependent pump, pulling dsDNA into and through the RuvAB complex. RuvB forms 2 homohexamers on either side of HJ DNA bound by 1 or 2 RuvA tetramers; 4 subunits per hexamer contact DNA at a time. Coordinated motions by a converter formed by DNA-disengaged RuvB subunits stimulates ATP hydrolysis and nucleotide exchange. Immobilization of the converter enables RuvB to convert the ATP-contained energy into a lever motion, pulling 2 nucleotides of DNA out of the RuvA tetramer per ATP hydrolyzed, thus driving DNA branch migration. The RuvB motors rotate together with the DNA substrate, which together with the progressing nucleotide cycle form the mechanistic basis for DNA recombination by continuous HJ branch migration. Branch migration allows RuvC to scan DNA until it finds its consensus sequence, where it cleaves and resolves cruciform DNA. The sequence is that of Holliday junction branch migration complex subunit RuvB from Bradyrhizobium diazoefficiens (strain JCM 10833 / BCRC 13528 / IAM 13628 / NBRC 14792 / USDA 110).